The sequence spans 157 residues: MRIGHGYDVHRFGEGDFITLGGVRIPHKFGLVAHSDGDVLLHALSDALLGAVALGDIGKHFPDTDPTFKGADSRALLRHVMSLVRGKGYAVGNVDATIIAQAPKMAPHIQSMRERIAEDLGVELDQVNVKATTTEKLGFTGREEGIAVHAVALLVKA.

Asp8 and His10 together coordinate a divalent metal cation. 4-CDP-2-C-methyl-D-erythritol 2-phosphate contacts are provided by residues Asp8–His10 and His34–Ser35. His42 contributes to the a divalent metal cation binding site. 4-CDP-2-C-methyl-D-erythritol 2-phosphate-binding positions include Asp56–Gly58, Phe61–Asp65, Ala100–Ala106, Thr132–Glu135, Phe139, and Arg142.

The protein belongs to the IspF family. As to quaternary structure, homotrimer. The cofactor is a divalent metal cation.

It catalyses the reaction 4-CDP-2-C-methyl-D-erythritol 2-phosphate = 2-C-methyl-D-erythritol 2,4-cyclic diphosphate + CMP. Its pathway is isoprenoid biosynthesis; isopentenyl diphosphate biosynthesis via DXP pathway; isopentenyl diphosphate from 1-deoxy-D-xylulose 5-phosphate: step 4/6. Functionally, involved in the biosynthesis of isopentenyl diphosphate (IPP) and dimethylallyl diphosphate (DMAPP), two major building blocks of isoprenoid compounds. Catalyzes the conversion of 4-diphosphocytidyl-2-C-methyl-D-erythritol 2-phosphate (CDP-ME2P) to 2-C-methyl-D-erythritol 2,4-cyclodiphosphate (ME-CPP) with a corresponding release of cytidine 5-monophosphate (CMP). This is 2-C-methyl-D-erythritol 2,4-cyclodiphosphate synthase from Ectopseudomonas mendocina (strain ymp) (Pseudomonas mendocina).